The primary structure comprises 840 residues: Leucine--tRNA ligase (840 aa).

The 'HIGH' region signature appears at 44-55; it reads PYPSANGLHVGH. The 'KMSKS' region motif lies at 617–621; the sequence is KMSKS. Lysine 620 contributes to the ATP binding site.

Belongs to the class-I aminoacyl-tRNA synthetase family.

It localises to the cytoplasm. The catalysed reaction is tRNA(Leu) + L-leucine + ATP = L-leucyl-tRNA(Leu) + AMP + diphosphate. The chain is Leucine--tRNA ligase from Borrelia garinii subsp. bavariensis (strain ATCC BAA-2496 / DSM 23469 / PBi) (Borreliella bavariensis).